We begin with the raw amino-acid sequence, 200 residues long: BREX protein BrxA (200 aa).

This sequence belongs to the BrxA family.

Functionally, BREX systems (bacteriophage exclusion) provide immunity against bacteriophage. Part of a type 1 BREX system. This system allows phage adsorption but prevents phage DNA replication, without degradation of the phage DNA. Methylation of bacterial DNA by PglX probably guides self/non-self discrimination. When the brxA-brxB-brxC-pglX and pglZ-brxL operons are transformed into a susceptible B.subtilis strain (BEST7003) they confer resistance to bacteriophages SPbeta, SP16, Zeta, phi3T and SP02 and partial protection to phages SP01 and SP82G (these include lytic and temperate phage). They do not protect against phages phi105, rho10 or rho14. Additionally confers a very slight reduction in efficiency of plasmid transformation. The sequence is that of BREX protein BrxA from Bacillus cereus (strain H3081.97).